Here is a 240-residue protein sequence, read N- to C-terminus: Glutathione S-transferase theta-1 (240 aa).

The GST N-terminal domain occupies 2 to 82 (VLELYLDLLS…YLAHKYKVPD (81 aa)). Residues histidine 40, 53–54 (RV), and 66–67 (ES) contribute to the glutathione site. The GST C-terminal domain maps to 88–222 (DLQARARVDE…VILKVKDCPP (135 aa)).

Belongs to the GST superfamily. Theta family. In terms of assembly, homodimer. In terms of tissue distribution, in liver, highest expression found in central vein limiting plate hepatocytes. Also expressed in interlobular bile duct epithelial cells. In lung, expressed in club cells and ciliated cells of the bronchiolar epithelium and in type II alveolar cells of the lung parenchyma.

The protein localises to the cytoplasm. It localises to the nucleus. It catalyses the reaction RX + glutathione = an S-substituted glutathione + a halide anion + H(+). In terms of biological role, conjugation of reduced glutathione to a wide number of exogenous and endogenous hydrophobic electrophiles. Also binds steroids, bilirubin, carcinogens and numerous organic anions. Has dichloromethane dehalogenase activity. This Mus musculus (Mouse) protein is Glutathione S-transferase theta-1 (Gstt1).